A 94-amino-acid chain; its full sequence is Small ribosomal subunit protein uS19 (94 aa).

Belongs to the universal ribosomal protein uS19 family.

In terms of biological role, protein S19 forms a complex with S13 that binds strongly to the 16S ribosomal RNA. In Dictyoglomus thermophilum (strain ATCC 35947 / DSM 3960 / H-6-12), this protein is Small ribosomal subunit protein uS19.